The primary structure comprises 446 residues: MCATDNAPAANAAPEKPSNVGVEVGHTGEQTNPYGANPADFLSNVSKFQLIESTLREGEQFASAFFDTETKIEIAKALDDFGVDYIELTSPAASEQSRSDCEAICKLGLKAKILTHIRCHMDDARLAVSTGVDGVDVVIGTSQFLRQYSHGKDMNYIAQSAVEVIEFVKSHGIEIRFSSEDSFRSDLVDLLNIYRTVDKIGVNRVGIADTVGCANPRQVYELVRTLKSVVSCDIECHFHNDTGCAIANAYTALEAGANLIDVSVLGIGERNGITSLGGLMARMIAADRDYVLSKYKLHKLRDLENLVADAVQVNIPFNNPITGFCAFTHKAGIHAKAILANPSTYEILNPADFGLTRYIHFANRLTGWNAIKSRVDQLNLHLTDAQCKDVTAKIKKLGDVRSLNIDDVDSIIREFHADVTSTPTVAATEGPAVEDEPAAKKAKTEE.

The segment covering 1-14 (MCATDNAPAANAAP) has biased composition (low complexity). The interval 1–36 (MCATDNAPAANAAPEKPSNVGVEVGHTGEQTNPYGA) is disordered. Residues 48–307 (FQLIESTLRE…HKLRDLENLV (260 aa)) form the Pyruvate carboxyltransferase domain. A 2-oxoglutarate-binding site is contributed by Arg56. A Mg(2+)-binding site is contributed by Glu57. 2-oxoglutarate-binding residues include His116, Arg176, and Thr210. Mg(2+) is bound by residues His237 and His239. The active-site Proton acceptor is His334. Residues 422-446 (TPTVAATEGPAVEDEPAAKKAKTEE) form a disordered region. Basic and acidic residues predominate over residues 437-446 (PAAKKAKTEE).

The protein belongs to the alpha-IPM synthase/homocitrate synthase family. Homocitrate synthase LYS20/LYS21 subfamily. It depends on Mg(2+) as a cofactor. Mn(2+) is required as a cofactor.

The protein localises to the mitochondrion. It carries out the reaction acetyl-CoA + 2-oxoglutarate + H2O = (2R)-homocitrate + CoA + H(+). Its pathway is amino-acid biosynthesis; L-lysine biosynthesis via AAA pathway; L-alpha-aminoadipate from 2-oxoglutarate: step 1/5. Catalyzes the aldol-type condensation of 2-oxoglutarate with acetyl-CoA to yield homocitrate. Carries out the first step of the alpha-aminoadipate (AAA) lysine biosynthesis pathway. In Yarrowia lipolytica (strain CLIB 122 / E 150) (Yeast), this protein is Homocitrate synthase, mitochondrial (LYS1).